Reading from the N-terminus, the 425-residue chain is Caveolae-associated protein 2 (425 aa).

Residues 1 to 42 (MGEDAAQAEKFQHPGSDMRQEKPSSPSPMPSSTPSPSLNLGN) form a disordered region. Residue glycine 2 is modified to N-acetylglycine. Residues 2-168 (GEDAAQAEKF…IFQEENEIPA (167 aa)) are interaction with CAVIN1. A compositionally biased stretch (basic and acidic residues) spans 10-22 (KFQHPGSDMRQEK). Phosphoserine occurs at positions 27, 35, 37, and 51. Coiled coils occupy residues 61-82 (LLDK…MEQR) and 125-154 (TRAV…RRNH). The interval 62-100 (LDKLVNMLDAVQENQHKMEQRQISLEGSVKGIQNDLTKL) is leucine-zipper. Residues threonine 196 and threonine 199 each carry the phosphothreonine modification. 2 disordered regions span residues 199-234 (TVDL…IKRS) and 271-425 (IKKS…HQTS). Phosphoserine occurs at positions 203, 204, and 218. Acidic residues predominate over residues 203–219 (SSDDDLPHDEEALEDSA). Positions 210–268 (HDEEALEDSAEEKVEESRAEKIKRSSLKKVDSLKKAFSRQNIEKKMNKLGTKIVSVERR) form a coiled coil. Basic and acidic residues predominate over residues 220–234 (EEKVEESRAEKIKRS). Over residues 274-287 (SLTSNHQKISSGKS) the composition is skewed to polar residues. Phosphoserine is present on residues serine 283, serine 284, serine 287, serine 288, and serine 293. A compositionally biased stretch (basic and acidic residues) spans 303-317 (REGESHAENETKSED). Phosphoserine occurs at positions 332, 341, 366, and 370. Threonine 375 carries the phosphothreonine modification. Residues 376–385 (IVEDEEEESV) show a composition bias toward acidic residues. Position 395 is a phosphotyrosine (tyrosine 395). Serine 403 bears the Phosphoserine mark.

Belongs to the CAVIN family. As to quaternary structure, component of the CAVIN complex composed of CAVIN1, CAVIN2, CAVIN3 and CAVIN4. Binds to PRKCA in the presence of phosphatidylserine. Interacts with CAVIN4; this augments the transactivation of NPPA by CAVIN4. Interacts with CAVIN1. Interacts with CAV3. In terms of processing, phosphorylated on Ser residues. Highly expressed in heart and lung, and expressed at lower levels in brain, kidney, liver, pancreas, placenta, and skeletal muscle.

Its subcellular location is the cytoplasm. It is found in the cytosol. It localises to the membrane. The protein resides in the caveola. Its function is as follows. Plays an important role in caveolar biogenesis and morphology. Regulates caveolae morphology by inducing membrane curvature within caveolae. Plays a role in caveola formation in a tissue-specific manner. Required for the formation of caveolae in the lung and fat endothelia but not in the heart endothelia. Negatively regulates the size or stability of CAVIN complexes in the lung endothelial cells. May play a role in targeting PRKCA to caveolae. This is Caveolae-associated protein 2 from Homo sapiens (Human).